We begin with the raw amino-acid sequence, 573 residues long: Flagellin B (573 aa).

Belongs to the bacterial flagellin family. As to quaternary structure, heteromer of FlaA and FlaB. A flagellar filament composed exclusively of FlaA is indistinguishable in length from that of the wild-type and shows a slight reduction in motility. The flagellar filament composed exclusively of the FlaB is severely truncated in length and greatly reduced in motility. Thus, while both flagellins are not necessary for motility, both are required for a fully active flagellar filament.

Its subcellular location is the secreted. The protein resides in the bacterial flagellum. In terms of biological role, flagellin is the subunit protein which polymerizes to form the filaments of bacterial flagella. This Campylobacter coli protein is Flagellin B (flaB).